A 261-amino-acid polypeptide reads, in one-letter code: UPF0328 protein ECU06_0100 (261 aa).

Belongs to the UPF0328 family.

In Encephalitozoon cuniculi (strain GB-M1) (Microsporidian parasite), this protein is UPF0328 protein ECU06_0100.